Here is a 540-residue protein sequence, read N- to C-terminus: Probable metabolite transport protein YFL040W (540 aa).

The Cytoplasmic segment spans residues 1–29 (MTAMKAIVWRLPKMPKIKITKTYEVTKIT). The chain crosses the membrane as a helical span at residues 30–50 (AILTLVGFIMGLEVPSLATFL). Topologically, residues 51-67 (TNKTFNEYFKYPTPLQQ) are extracellular. A glycan (N-linked (GlcNAc...) asparagine) is linked at Asn52. Residues 68–88 (GLLMGSTPLGGIMGCFICCIM) form a helical membrane-spanning segment. Over 89 to 101 (NDRFSRIYQFQSG) the chain is Cytoplasmic. A helical transmembrane segment spans residues 102 to 122 (IIIWNIVTLLNFCIWDILGLL). Residues 123 to 126 (ICRM) are Extracellular-facing. Residues 127 to 147 (IKGMILGNFSILVASYANEVI) traverse the membrane as a helical segment. Over 148-158 (PRGKRGSTMSY) the chain is Cytoplasmic. Residues 159-179 (IQLCLTIGILVMHYLCIALSL) traverse the membrane as a helical segment. At 180–187 (WDSHFAFR) the chain is on the extracellular side. Residues 188–208 (IAWCIGIIPGLLFWMASYALP) traverse the membrane as a helical segment. The Cytoplasmic segment spans residues 209–275 (ESYHWLVLHG…KKLPRGSFKP (67 aa)). A helical transmembrane segment spans residues 276–296 (LILGMTLQLLVQFSGINIILG). At 297–313 (YITYICEIVGLEGNVKL) the chain is on the extracellular side. A helical membrane pass occupies residues 314 to 334 (FTSSIPYFINMVLSLLPITFI). Over 335–341 (DYTSRKL) the chain is Cytoplasmic. A helical transmembrane segment spans residues 342-362 (ITLLGGFPISGLLITIGALFV). Topologically, residues 363–385 (KYGQDTKPIDGNRSLVWSIGENP) are extracellular. Residue Asn374 is glycosylated (N-linked (GlcNAc...) asparagine). The helical transmembrane segment at 386–406 (FVGGWILTLCFLIVGIFAMSL) threads the bilayer. Topologically, residues 407 to 428 (SSIPWVYTNEMLPSRVKVKGFA) are cytoplasmic. A helical transmembrane segment spans residues 429–449 (ICVTFGWLGNFILTFLCPVMI). Over 450 to 455 (ERLKGT) the chain is Extracellular. A helical membrane pass occupies residues 456–476 (TFIIFGSLTFLISLSVLIWFP). Topologically, residues 477–540 (ETKGMSIEDI…KLKSDEEMII (64 aa)) are cytoplasmic. The segment at 499 to 540 (NLHGEKGIKTPDSNSNGGSTRSSQEGQLHKPIKLKSDEEMII) is disordered. The span at 509 to 524 (PDSNSNGGSTRSSQEG) shows a compositional bias: polar residues.

This sequence belongs to the major facilitator superfamily. Sugar transporter (TC 2.A.1.1) family.

Its subcellular location is the membrane. The chain is Probable metabolite transport protein YFL040W from Saccharomyces cerevisiae (strain ATCC 204508 / S288c) (Baker's yeast).